The following is a 150-amino-acid chain: 3-dehydroquinate dehydratase (150 aa).

Y26 functions as the Proton acceptor in the catalytic mechanism. 3 residues coordinate substrate: N77, H83, and D90. H103 acts as the Proton donor in catalysis. Substrate contacts are provided by residues 104 to 105 (LS) and R114.

This sequence belongs to the type-II 3-dehydroquinase family. As to quaternary structure, homododecamer.

It catalyses the reaction 3-dehydroquinate = 3-dehydroshikimate + H2O. It participates in metabolic intermediate biosynthesis; chorismate biosynthesis; chorismate from D-erythrose 4-phosphate and phosphoenolpyruvate: step 3/7. Catalyzes a trans-dehydration via an enolate intermediate. The polypeptide is 3-dehydroquinate dehydratase (Mannheimia succiniciproducens (strain KCTC 0769BP / MBEL55E)).